The sequence spans 674 residues: Acyl-coenzyme A oxidase acox-1.1 (674 aa).

Residues 149–152 (YAQT), 157–158 (GT), and Gly-191 contribute to the FAD site. Substrate-binding positions include 285–288 (KINY) and Arg-295. Residues Arg-320 and 340–343 (QQHR) each bind FAD. Residues His-342, Ser-392, His-396, and Gln-404 each coordinate ATP. Position 411 (Gly-411) interacts with FAD. 433–434 (YE) serves as a coordination point for substrate. Glu-434 acts as the Proton acceptor in catalysis. Glu-436 is an FAD binding site. ATP is bound by residues 533 to 536 (RASR) and Tyr-581. The Microbody targeting signal motif lies at 672–674 (SKL).

The protein belongs to the acyl-CoA oxidase family. Homodimer. Forms a heterodimer with acox-1.2. Forms a heterodimer with acox-1.3; the interaction may be important for the stability of acox-1.3. Requires FAD as cofactor. In terms of tissue distribution, expressed in hypodermis and intestine.

It is found in the peroxisome. It catalyses the reaction nonanoyl-CoA + O2 = (2E)-nonenoyl-CoA + H2O2. It carries out the reaction dodecanoyl-CoA + O2 = (2E)-dodecenoyl-CoA + H2O2. The catalysed reaction is a 2,3-saturated acyl-CoA + O2 = a (2E)-enoyl-CoA + H2O2. The enzyme catalyses heptanoyl-CoA + O2 = (2E)-heptenoyl-CoA + H2O2. It catalyses the reaction (8R)-8-hydroxynonanoyl-CoA + O2 = (2E,8R)-8-hydroxynonenoyl-CoA + H2O2. It carries out the reaction pentanoyl-CoA + O2 = (2E)-pentenoyl-CoA + H2O2. The catalysed reaction is hexadecanoyl-CoA + O2 = (2E)-hexadecenoyl-CoA + H2O2. The enzyme catalyses IC-asc-C7-CoA + O2 = IC-asc-DeltaC7-CoA + H2O2. It catalyses the reaction IC-asc-C9-CoA + O2 = IC-asc-DeltaC9-CoA + H2O2. It carries out the reaction asc-omegaC5-CoA + O2 = asc-omegaDeltaC5-CoA + H2O2. The catalysed reaction is asc-C7-CoA + O2 = asc-DeltaC7-CoA + H2O2. The enzyme catalyses asc-omegaC7-CoA + O2 = asc-omegaDeltaC7-CoA + H2O2. It catalyses the reaction asc-C9-CoA + O2 = asc-DeltaC9-CoA + H2O2. It carries out the reaction asc-C13-CoA + O2 = asc-DeltaC13-CoA + H2O2. Its pathway is lipid metabolism; peroxisomal fatty acid beta-oxidation. Its activity is regulated as follows. Activated by ATP. ATP binding leads to a conformational change that promotes FAD cofactor binding and enzyme activity. ATP binding likely occurs during acox-1.1 folding and/or dimer formation. Functionally, involved in the first step of peroxisomal beta-oxidation by catalyzing the desaturation of fatty acid-derived side chains. Specifically, catalyzes the desaturation of fatty acids heptanoyl-CoA (C7), nonanoyl-CoA (C9), dodecanoyl-CoA (C12) and to a lesser extent pentanoyl-CoA (C5) and hexadecanoyl-CoA (C16), and hydroxylated fatty acid hydroxynonanoyl-CoA. Also, catalyzes the desaturation fatty acid-derived side chains of ascaroside pheromones, which regulates development and behavior. Specifically, shortens ascaroside with 5-carbon omega side chain (asc-omega-C5), 7-carbon side chain (asc-C7), 9-carbon side chain (asc-C9), 11-carbon side chain (asc-C11), 13-carbon side chain (asc-C13), 15-carbon side chain (asc-C15) and to a lesser extent ascarosides with 7-omega-carbon side chain (asc-omega-C7). Also shortens indol-3-carbonyl(IC)-ascarosides with 7-carbon side chain (IC-asc-C7) and to a lesser extent (IC)-ascarosides with 9-carbon side chain (IC-asc-C9). May associate and regulate the folding and/or the catalytic activity of other acyl-coenzyme A oxidases including acox-1.2, acox-1.3, acox-1.4 and acox-3 modulating the type of ascarosides produced. In association with acox-1.3, catalyzes the desaturation of asc-C7-CoA but not of fatty acids or hydroxylated fatty acids. Involved in the biosynthesis of asc-C6-MK (daumone 2) and asc-delta-C9 (daumone 3) but not asc-C7 (daumone 1); daumones are pheromones produced during unfavourable growth conditions which promote entry into the dauer stage. This Caenorhabditis elegans protein is Acyl-coenzyme A oxidase acox-1.1.